The primary structure comprises 114 residues: uncharacterized protein (114 aa).

Fe cation is bound by residues cysteine 40, cysteine 106, and cysteine 108.

It belongs to the HesB/IscA family. Ycf83 subfamily.

Its subcellular location is the plastid. It is found in the chloroplast. This is an uncharacterized protein from Pyropia yezoensis (Susabi-nori).